A 473-amino-acid polypeptide reads, in one-letter code: Glutamyl-tRNA reductase (473 aa).

Substrate contacts are provided by residues 49–52 (TCNR), Ser109, 114–116 (ESQ), and Gln120. Cys50 (nucleophile) is an active-site residue. Positions 196 to 215 (LDGGGVAAEGPRHAVTPEPP) are disordered. Position 226–231 (226–231 (GAGAVG)) interacts with NADP(+).

It belongs to the glutamyl-tRNA reductase family. Homodimer.

The enzyme catalyses (S)-4-amino-5-oxopentanoate + tRNA(Glu) + NADP(+) = L-glutamyl-tRNA(Glu) + NADPH + H(+). It participates in porphyrin-containing compound metabolism; protoporphyrin-IX biosynthesis; 5-aminolevulinate from L-glutamyl-tRNA(Glu): step 1/2. Catalyzes the NADPH-dependent reduction of glutamyl-tRNA(Glu) to glutamate 1-semialdehyde (GSA). The protein is Glutamyl-tRNA reductase of Frankia casuarinae (strain DSM 45818 / CECT 9043 / HFP020203 / CcI3).